A 322-amino-acid polypeptide reads, in one-letter code: Lipoyl synthase (322 aa).

A compositionally biased stretch (polar residues) spans 1-14; that stretch reads MKTLDENQAPSRQT. Residues 1–30 form a disordered region; sequence MKTLDENQAPSRQTPESHRRGAEKLSRIPV. Residues 15-26 show a composition bias toward basic and acidic residues; that stretch reads PESHRRGAEKLS. The [4Fe-4S] cluster site is built by Cys-70, Cys-75, Cys-81, Cys-96, Cys-100, Cys-103, and Ser-310. Residues 82-299 enclose the Radical SAM core domain; sequence FGHGTATFMI…AGYARELGFA (218 aa).

The protein belongs to the radical SAM superfamily. Lipoyl synthase family. [4Fe-4S] cluster is required as a cofactor.

Its subcellular location is the cytoplasm. The enzyme catalyses [[Fe-S] cluster scaffold protein carrying a second [4Fe-4S](2+) cluster] + N(6)-octanoyl-L-lysyl-[protein] + 2 oxidized [2Fe-2S]-[ferredoxin] + 2 S-adenosyl-L-methionine + 4 H(+) = [[Fe-S] cluster scaffold protein] + N(6)-[(R)-dihydrolipoyl]-L-lysyl-[protein] + 4 Fe(3+) + 2 hydrogen sulfide + 2 5'-deoxyadenosine + 2 L-methionine + 2 reduced [2Fe-2S]-[ferredoxin]. It functions in the pathway protein modification; protein lipoylation via endogenous pathway; protein N(6)-(lipoyl)lysine from octanoyl-[acyl-carrier-protein]: step 2/2. Catalyzes the radical-mediated insertion of two sulfur atoms into the C-6 and C-8 positions of the octanoyl moiety bound to the lipoyl domains of lipoate-dependent enzymes, thereby converting the octanoylated domains into lipoylated derivatives. The polypeptide is Lipoyl synthase (Methylococcus capsulatus (strain ATCC 33009 / NCIMB 11132 / Bath)).